The chain runs to 255 residues: Triosephosphate isomerase (255 aa).

Substrate is bound at residue 10-12; the sequence is NWK. Histidine 96 functions as the Electrophile in the catalytic mechanism. Glutamate 168 serves as the catalytic Proton acceptor. Residues glycine 174, serine 213, and 234–235 contribute to the substrate site; that span reads GG.

Belongs to the triosephosphate isomerase family. In terms of assembly, homodimer.

Its subcellular location is the cytoplasm. The enzyme catalyses D-glyceraldehyde 3-phosphate = dihydroxyacetone phosphate. It functions in the pathway carbohydrate biosynthesis; gluconeogenesis. Its pathway is carbohydrate degradation; glycolysis; D-glyceraldehyde 3-phosphate from glycerone phosphate: step 1/1. Involved in the gluconeogenesis. Catalyzes stereospecifically the conversion of dihydroxyacetone phosphate (DHAP) to D-glyceraldehyde-3-phosphate (G3P). This Histophilus somni (strain 129Pt) (Haemophilus somnus) protein is Triosephosphate isomerase.